A 296-amino-acid chain; its full sequence is Phosphoribosylaminoimidazole-succinocarboxamide synthase (296 aa).

The protein belongs to the SAICAR synthetase family.

The enzyme catalyses 5-amino-1-(5-phospho-D-ribosyl)imidazole-4-carboxylate + L-aspartate + ATP = (2S)-2-[5-amino-1-(5-phospho-beta-D-ribosyl)imidazole-4-carboxamido]succinate + ADP + phosphate + 2 H(+). It functions in the pathway purine metabolism; IMP biosynthesis via de novo pathway; 5-amino-1-(5-phospho-D-ribosyl)imidazole-4-carboxamide from 5-amino-1-(5-phospho-D-ribosyl)imidazole-4-carboxylate: step 1/2. In Geobacter sulfurreducens (strain ATCC 51573 / DSM 12127 / PCA), this protein is Phosphoribosylaminoimidazole-succinocarboxamide synthase.